Here is a 262-residue protein sequence, read N- to C-terminus: Hydroxyethylthiazole kinase (262 aa).

Methionine 50 is a substrate binding site. ATP is bound by residues arginine 125 and threonine 171. Position 198 (glycine 198) interacts with substrate.

It belongs to the Thz kinase family. The cofactor is Mg(2+).

It catalyses the reaction 5-(2-hydroxyethyl)-4-methylthiazole + ATP = 4-methyl-5-(2-phosphooxyethyl)-thiazole + ADP + H(+). It functions in the pathway cofactor biosynthesis; thiamine diphosphate biosynthesis; 4-methyl-5-(2-phosphoethyl)-thiazole from 5-(2-hydroxyethyl)-4-methylthiazole: step 1/1. Its function is as follows. Catalyzes the phosphorylation of the hydroxyl group of 4-methyl-5-beta-hydroxyethylthiazole (THZ). This Escherichia coli O45:K1 (strain S88 / ExPEC) protein is Hydroxyethylthiazole kinase.